The following is a 246-amino-acid chain: Probable transcriptional regulatory protein WRi_002620 (246 aa).

The segment at 1–22 (MAGHSQFSNIKHRKGAQDAKRS) is disordered.

This sequence belongs to the TACO1 family.

Its subcellular location is the cytoplasm. In Wolbachia sp. subsp. Drosophila simulans (strain wRi), this protein is Probable transcriptional regulatory protein WRi_002620.